We begin with the raw amino-acid sequence, 209 residues long: MTTKKRTASSTRWMQEHFDDHYVKLAQKRGLRSRAAFKLEEIQEKDHLIKQGMTVVDLGAAPGGWSQVAAKLTGDKGKVIACDILPMDPIVGVDFLQGDFREDKVLQALLERVGQDKVDVVLSDMAPNMSGSGAVDQPRAMYLVELALDMCHQVLTPNGCFAVKVFQGEGFDDYIKTVKQAFKVVKTRKPDSSRARSREVYLVATGYKL.

S-adenosyl-L-methionine-binding residues include glycine 63, tryptophan 65, aspartate 83, aspartate 99, and aspartate 124. Lysine 164 functions as the Proton acceptor in the catalytic mechanism.

Belongs to the class I-like SAM-binding methyltransferase superfamily. RNA methyltransferase RlmE family.

Its subcellular location is the cytoplasm. The enzyme catalyses uridine(2552) in 23S rRNA + S-adenosyl-L-methionine = 2'-O-methyluridine(2552) in 23S rRNA + S-adenosyl-L-homocysteine + H(+). In terms of biological role, specifically methylates the uridine in position 2552 of 23S rRNA at the 2'-O position of the ribose in the fully assembled 50S ribosomal subunit. The polypeptide is Ribosomal RNA large subunit methyltransferase E (Shewanella frigidimarina (strain NCIMB 400)).